Consider the following 166-residue polypeptide: Large ribosomal subunit protein uL10 (166 aa).

The protein belongs to the universal ribosomal protein uL10 family. Part of the ribosomal stalk of the 50S ribosomal subunit. The N-terminus interacts with L11 and the large rRNA to form the base of the stalk. The C-terminus forms an elongated spine to which L12 dimers bind in a sequential fashion forming a multimeric L10(L12)X complex.

Its function is as follows. Forms part of the ribosomal stalk, playing a central role in the interaction of the ribosome with GTP-bound translation factors. This is Large ribosomal subunit protein uL10 from Streptococcus gordonii (strain Challis / ATCC 35105 / BCRC 15272 / CH1 / DL1 / V288).